A 244-amino-acid chain; its full sequence is Thaumatin-like protein 1 (244 aa).

An N-terminal signal peptide occupies residues 1–22; it reads MKFEALIGLVLVFLSEHAGVYS. 8 disulfide bridges follow: C31/C243, C79/C89, C94/C101, C149/C232, C154/C215, C162/C178, C182/C191, and C192/C202. N150 carries an N-linked (GlcNAc...) asparagine glycan.

This sequence belongs to the thaumatin family. Post-translationally, N-glycosylated. In terms of tissue distribution, style.

Its subcellular location is the secreted. This chain is Thaumatin-like protein 1 (TL1), found in Pyrus pyrifolia (Chinese pear).